The chain runs to 462 residues: Cytochrome P450 20A1 (462 aa).

A helical transmembrane segment spans residues 4 to 24 (FAIFAVTFLLALVGAVLYLYP). Cysteine 409 is a heme binding site.

The protein belongs to the cytochrome P450 family. The cofactor is heme.

Its subcellular location is the membrane. The chain is Cytochrome P450 20A1 (CYP20A1) from Bos taurus (Bovine).